We begin with the raw amino-acid sequence, 156 residues long: Endoribonuclease YbeY (156 aa).

Positions 122, 126, and 132 each coordinate Zn(2+).

It belongs to the endoribonuclease YbeY family. The cofactor is Zn(2+).

Its subcellular location is the cytoplasm. In terms of biological role, single strand-specific metallo-endoribonuclease involved in late-stage 70S ribosome quality control and in maturation of the 3' terminus of the 16S rRNA. The polypeptide is Endoribonuclease YbeY (Geobacillus kaustophilus (strain HTA426)).